A 65-amino-acid chain; its full sequence is Small ribosomal subunit protein bS21 (65 aa).

The segment at 43 to 65 (VDDRLKRARSKRRAQRANEESNA) is disordered. The segment covering 48–57 (KRARSKRRAQ) has biased composition (basic residues).

The protein belongs to the bacterial ribosomal protein bS21 family.

This chain is Small ribosomal subunit protein bS21, found in Chloroherpeton thalassium (strain ATCC 35110 / GB-78).